A 162-amino-acid chain; its full sequence is uncharacterized protein (162 aa).

The N-terminal stretch at 1 to 34 is a signal peptide; it reads MRKKNNIKKWLLIIAGFLIICIITLFVMVSGNKV.

This is an uncharacterized protein from Bacillus subtilis (strain 168).